We begin with the raw amino-acid sequence, 296 residues long: Diaminopimelate epimerase (296 aa).

Substrate-binding residues include Asn17, Gln49, and Asn69. Residue Cys78 is the Proton donor of the active site. Substrate is bound by residues 79-80 (GN), Asn171, Asn205, and 223-224 (ER). Cys232 (proton acceptor) is an active-site residue. A substrate-binding site is contributed by 233 to 234 (GT).

It belongs to the diaminopimelate epimerase family. Homodimer.

It is found in the cytoplasm. It carries out the reaction (2S,6S)-2,6-diaminopimelate = meso-2,6-diaminopimelate. The protein operates within amino-acid biosynthesis; L-lysine biosynthesis via DAP pathway; DL-2,6-diaminopimelate from LL-2,6-diaminopimelate: step 1/1. In terms of biological role, catalyzes the stereoinversion of LL-2,6-diaminopimelate (L,L-DAP) to meso-diaminopimelate (meso-DAP), a precursor of L-lysine and an essential component of the bacterial peptidoglycan. In Methylorubrum extorquens (strain PA1) (Methylobacterium extorquens), this protein is Diaminopimelate epimerase.